The following is a 534-amino-acid chain: UDP-glucuronosyltransferase 1A3 (534 aa).

The signal sequence occupies residues 1 to 28; the sequence is MATGLQVPLPWLATGLLLLLSVQPWAES. Residues Asn119, Asn142, Asn296, and Asn348 are each glycosylated (N-linked (GlcNAc...) asparagine). A helical transmembrane segment spans residues 492–508; the sequence is VIGFLLAVVLTVAFITF.

It belongs to the UDP-glycosyltransferase family. Homodimer. Homooligomer. Interacts with UGT1A1, UGT1A4, UGT1A6, UGT1A7, UGT1A8, UGT1A9 and UGT1A10 to form heterodimers. Isoform 1 interacts with isoform 2/i2 suggesting that oligomerization is involved in negative regulation of transferase activity by isoform 2. Isoform 1 also interacts with respective i2 isoforms of UGT1A1, UGT1A4, UGT1A6, UGT1A7, UGT1A8, UGT1A9 and UGT1A10. In terms of tissue distribution, expressed in liver, kidney, colon, esophagus and small intestine. As to expression, expressed in liver, kidney and colon. Not expressed in esophagus and small intestine.

The protein resides in the endoplasmic reticulum membrane. It carries out the reaction glucuronate acceptor + UDP-alpha-D-glucuronate = acceptor beta-D-glucuronoside + UDP + H(+). The catalysed reaction is 17beta-estradiol + UDP-alpha-D-glucuronate = 17beta-estradiol 3-O-(beta-D-glucuronate) + UDP + H(+). It catalyses the reaction 17beta-estradiol + UDP-alpha-D-glucuronate = 17beta-estradiol 17-O-(beta-D-glucuronate) + UDP + H(+). The enzyme catalyses 17alpha-estradiol + UDP-alpha-D-glucuronate = 17alpha-estradiol 3-O-(beta-D-glucuronate) + UDP + H(+). It carries out the reaction estrone + UDP-alpha-D-glucuronate = estrone 3-O-(beta-D-glucuronate) + UDP + H(+). The catalysed reaction is chenodeoxycholate + UDP-alpha-D-glucuronate = chenodeoxycholoyl-24-O-(beta-D-glucuronate) + UDP. It catalyses the reaction deoxycholate + UDP-alpha-D-glucuronate = deoxycholoyl-24-O-(beta-D-glucuronate) + UDP. The enzyme catalyses lithocholate + UDP-alpha-D-glucuronate = lithocholoyl-24-O-(beta-D-glucuronate) + UDP. It carries out the reaction hyodeoxycholate + UDP-alpha-D-glucuronate = hyodeoxycholoyl-24-O-(beta-D-glucuronate) + UDP. The catalysed reaction is hyocholate + UDP-alpha-D-glucuronate = hyocholoyl-24-O-(beta-D-glucuronate) + UDP. It catalyses the reaction calcidiol + UDP-alpha-D-glucuronate = calcidiol 25-O-(beta-D-glucuronide) + UDP + H(+). The enzyme catalyses (E)-ferulate + UDP-alpha-D-glucuronate = (E)-4-O-(beta-D-glucuronosyl)-ferulate + UDP + H(+). It carries out the reaction (E)-ferulate + UDP-alpha-D-glucuronate = (E)-ferulic acid beta-D-glucuronate ester + UDP. The catalysed reaction is losartan + UDP-alpha-D-glucuronate = losartan-2-N-beta-D-glucuronide + UDP. It catalyses the reaction candesartan + UDP-alpha-D-glucuronate = candesartan-2-N-beta-D-glucuronide + UDP. The enzyme catalyses zolasartan + UDP-alpha-D-glucuronate = zolarsartan-2-N-beta-D-glucuronide + UDP. UDP-glucuronosyltransferase (UGT) that catalyzes phase II biotransformation reactions in which lipophilic substrates are conjugated with glucuronic acid to increase the metabolite's water solubility, thereby facilitating excretion into either the urine or bile. Essential for the elimination and detoxification of drugs, xenobiotics and endogenous compounds. Catalyzes the glucuronidation of endogenous estrogen hormones such as estradiol and estrone. Contributes to bile acid (BA) detoxification by catalyzing the glucuronidation of BA substrates, which are natural detergents for dietary lipids absorption. Involved in the glucuronidation of calcidiol, which is the major circulating form of vitamin D3, essential for the regulation of calcium and phosphate homeostasis. Involved in the glucuronidation of the phytochemical ferulic acid at the phenolic or the carboxylic acid group. Involved in the glucuronidation of the AGTR1 angiotensin receptor antagonists losartan, candesartan and zolarsartan, which can inhibit the effect of angiotensin II. In terms of biological role, lacks UDP-glucuronosyltransferase (UGT) activity but acts as a negative regulator of isoform 1. In Homo sapiens (Human), this protein is UDP-glucuronosyltransferase 1A3.